We begin with the raw amino-acid sequence, 379 residues long: Cytochrome b (379 aa).

4 helical membrane-spanning segments follow: residues 33-53 (FGSLLGMCLVIQILTGLFLAM), 77-98 (WLIRYLHANGASMFFICLFIHV), 113-133 (WNIGIILLLTTMATAFVGYVL), and 178-198 (FFAFHFILPFIIAAFALVHLL). Heme b contacts are provided by His-83 and His-97. His-182 and His-196 together coordinate heme b. Residue His-201 coordinates a ubiquinone. Transmembrane regions (helical) follow at residues 226–246 (TKDLLGIFLLLLVLMILALFF), 288–308 (LGGVLALVLSILILATFPLLN), 320–340 (VTQVIYWIFIANLLVLTWIGG), and 347–367 (FTTIGQIASITYFAIIIILIP).

Belongs to the cytochrome b family. The cytochrome bc1 complex contains 11 subunits: 3 respiratory subunits (MT-CYB, CYC1 and UQCRFS1), 2 core proteins (UQCRC1 and UQCRC2) and 6 low-molecular weight proteins (UQCRH/QCR6, UQCRB/QCR7, UQCRQ/QCR8, UQCR10/QCR9, UQCR11/QCR10 and a cleavage product of UQCRFS1). This cytochrome bc1 complex then forms a dimer. Heme b is required as a cofactor.

It is found in the mitochondrion inner membrane. Its function is as follows. Component of the ubiquinol-cytochrome c reductase complex (complex III or cytochrome b-c1 complex) that is part of the mitochondrial respiratory chain. The b-c1 complex mediates electron transfer from ubiquinol to cytochrome c. Contributes to the generation of a proton gradient across the mitochondrial membrane that is then used for ATP synthesis. This Akodon paranaensis (Parana grass mouse) protein is Cytochrome b (MT-CYB).